The following is a 289-amino-acid chain: Inorganic pyrophosphatase (289 aa).

S2 carries the N-acetylserine modification. K57 is modified (N6-acetyllysine). Residues D116, D121, and D153 each contribute to the Mg(2+) site. N6-acetyllysine is present on K228. S250 is subject to Phosphoserine.

Belongs to the PPase family. In terms of assembly, homodimer. Mg(2+) is required as a cofactor. As to expression, expressed ubiquitously.

The protein resides in the cytoplasm. The catalysed reaction is diphosphate + H2O = 2 phosphate + H(+). This Homo sapiens (Human) protein is Inorganic pyrophosphatase (PPA1).